The sequence spans 327 residues: Phenylalanine--tRNA ligase alpha subunit (327 aa).

Glu252 is a binding site for Mg(2+).

Belongs to the class-II aminoacyl-tRNA synthetase family. Phe-tRNA synthetase alpha subunit type 1 subfamily. In terms of assembly, tetramer of two alpha and two beta subunits. Requires Mg(2+) as cofactor.

The protein resides in the cytoplasm. The enzyme catalyses tRNA(Phe) + L-phenylalanine + ATP = L-phenylalanyl-tRNA(Phe) + AMP + diphosphate + H(+). The polypeptide is Phenylalanine--tRNA ligase alpha subunit (Aliivibrio fischeri (strain ATCC 700601 / ES114) (Vibrio fischeri)).